The following is a 305-amino-acid chain: Large ribosomal subunit protein uL3c (305 aa).

A chloroplast-targeting transit peptide spans 1–84 (MAAILPTFSI…AVGGLEIKMM (84 aa)). Residues 228 to 256 (SHRALGSIGAGTTPGHVYKGKKMPGRMGG) form a disordered region.

In terms of assembly, component of the chloroplast large ribosomal subunit (LSU). Mature 70S chloroplast ribosomes of higher plants consist of a small (30S) and a large (50S) subunit. The 30S small subunit contains 1 molecule of ribosomal RNA (16S rRNA) and 24 different proteins. The 50S large subunit contains 3 rRNA molecules (23S, 5S and 4.5S rRNA) and 33 different proteins.

Its subcellular location is the plastid. The protein resides in the chloroplast. Component of the chloroplast ribosome (chloro-ribosome), a dedicated translation machinery responsible for the synthesis of chloroplast genome-encoded proteins, including proteins of the transcription and translation machinery and components of the photosynthetic apparatus. This chain is Large ribosomal subunit protein uL3c (RPL3), found in Spinacia oleracea (Spinach).